A 531-amino-acid polypeptide reads, in one-letter code: Tubulin-folding cofactor E (531 aa).

The region spanning Gly-32 to Arg-76 is the CAP-Gly domain. 9 LRR repeats span residues Ile-84–Leu-109, Leu-159–Glu-183, Leu-185–Val-213, Leu-233–Asp-256, Phe-260–Gln-284, Leu-285–Thr-308, Phe-318–Gly-342, Pro-344–Arg-366, and Val-474–Gln-497.

It belongs to the TBCE family. In terms of assembly, supercomplex made of cofactors A to E. Cofactors A and D function by capturing and stabilizing tubulin in a quasi-native conformation. Cofactor E binds to the cofactor D-tubulin complex; interaction with cofactor C then causes the release of tubulin polypeptides that are committed to the native state.

Its subcellular location is the cytoplasm. Functionally, essential tubulin-folding protein involved in the tubulin folding pathway. Not essential for cell viability. Probably involved in the binding of alpha-tubulin in the multimeric supercomplex. The protein is Tubulin-folding cofactor E (TFCE) of Arabidopsis thaliana (Mouse-ear cress).